The primary structure comprises 122 residues: Ig heavy chain V region M603 (122 aa).

The 121-residue stretch at 1–121 (EVKLVESGGG…WGAGTTVTVS (121 aa)) folds into the Ig-like domain.

The polypeptide is Ig heavy chain V region M603 (Mus musculus (Mouse)).